The sequence spans 256 residues: DNA repair protein RecO (256 aa).

It belongs to the RecO family.

Involved in DNA repair and RecF pathway recombination. This is DNA repair protein RecO from Bartonella henselae (strain ATCC 49882 / DSM 28221 / CCUG 30454 / Houston 1) (Rochalimaea henselae).